The chain runs to 372 residues: Glutamate 5-kinase (372 aa).

Residue Lys-14 coordinates ATP. Positions 54, 141, and 153 each coordinate substrate. An ATP-binding site is contributed by 173 to 174; the sequence is TD. One can recognise a PUA domain in the interval 280–358; sequence RGTLVLDDGA…EAIVRELGYM (79 aa).

The protein belongs to the glutamate 5-kinase family.

Its subcellular location is the cytoplasm. It carries out the reaction L-glutamate + ATP = L-glutamyl 5-phosphate + ADP. It participates in amino-acid biosynthesis; L-proline biosynthesis; L-glutamate 5-semialdehyde from L-glutamate: step 1/2. Functionally, catalyzes the transfer of a phosphate group to glutamate to form L-glutamate 5-phosphate. This Pseudomonas syringae pv. tomato (strain ATCC BAA-871 / DC3000) protein is Glutamate 5-kinase.